Here is an 851-residue protein sequence, read N- to C-terminus: Protein BCK2 (851 aa).

Residues 1 to 10 (MPKNSHHHRS) show a composition bias toward basic residues. 5 disordered regions span residues 1–91 (MPKN…RKKS), 233–271 (EVVP…MNTK), 315–355 (SLSL…LPEE), 466–504 (FLDG…YITT), and 698–722 (HASR…PNNV). A compositionally biased stretch (low complexity) spans 11-23 (SSVNSTKSRSTES). The segment covering 37 to 66 (ASGSTQASPDRNSSTGSCSTPVLPTMNVMS) has biased composition (polar residues). Basic and acidic residues predominate over residues 71–81 (VLLEDPRDNHT). Polar residues-rich tracts occupy residues 254–271 (SETN…MNTK), 334–349 (SPRT…SQSK), 489–504 (ISDA…YITT), and 702–722 (SESN…PNNV). Phosphoserine is present on serine 334. Phosphoserine is present on residues serine 757 and serine 761.

Functionally, dosage dependent suppressor of PKC1 deletion and MPK1 deletion. Involved in cell lysis. This Saccharomyces cerevisiae (strain ATCC 204508 / S288c) (Baker's yeast) protein is Protein BCK2 (BCK2).